The chain runs to 261 residues: MAESHLQSSLITASQFFEIWLHFDADGSGYLEGKELQNLIQELQQARKKAGLELSPEMKTFVDQYGQRDDGKIGIVELAHVLPTEENFLLLFRCQQLKSCEEFMKTWRKYDTDHGGFIETEELKNFLKDLLEKANKTVDDTKLAEYTDLMLKLFDSNNDGKLELTEMARLLPVQENFLLKFQGIKMCGKEFNKAFELYDQDGNGYIDENELDALLKDLCEKNKQDLDINNITTYKKNIMALSDGGKLYRTDLALILCAGDN.

Ala-2 bears the N-acetylalanine mark. Residues 2 to 7 (AESHLQ) are interaction with RANBP9. EF-hand domains lie at 11–46 (ITAS…LQQA), 53–88 (ELSP…EENF), 98–133 (KSCE…LLEK), 142–177 (KLAE…QENF), and 186–221 (MCGK…LCEK). 5 residues coordinate Ca(2+): Asp-24, Asp-26, Ser-28, Tyr-30, and Glu-35. Asp-111, Asp-113, Glu-122, Asp-155, Asn-157, Asp-159, Lys-161, Glu-166, Asp-199, Asp-201, Asn-203, Tyr-205, and Glu-210 together coordinate Ca(2+).

It belongs to the calbindin family. In terms of assembly, interacts with RANBP9.

Functionally, buffers cytosolic calcium. May stimulate a membrane Ca(2+)-ATPase and a 3',5'-cyclic nucleotide phosphodiesterase. The sequence is that of Calbindin (CALB1) from Pongo abelii (Sumatran orangutan).